The primary structure comprises 416 residues: Tyrosine--tRNA ligase (416 aa).

An L-tyrosine-binding site is contributed by Tyr-34. Positions Pro-39–His-48 match the 'HIGH' region motif. L-tyrosine contacts are provided by Tyr-165 and Gln-169. A 'KMSKS' region motif is present at residues Lys-227 to Thr-231. ATP is bound at residue Lys-230. Residues Lys-349 to Lys-416 enclose the S4 RNA-binding domain.

Belongs to the class-I aminoacyl-tRNA synthetase family. TyrS type 1 subfamily. In terms of assembly, homodimer.

The protein localises to the cytoplasm. The enzyme catalyses tRNA(Tyr) + L-tyrosine + ATP = L-tyrosyl-tRNA(Tyr) + AMP + diphosphate + H(+). Functionally, catalyzes the attachment of tyrosine to tRNA(Tyr) in a two-step reaction: tyrosine is first activated by ATP to form Tyr-AMP and then transferred to the acceptor end of tRNA(Tyr). In Ligilactobacillus salivarius (strain UCC118) (Lactobacillus salivarius), this protein is Tyrosine--tRNA ligase.